A 169-amino-acid polypeptide reads, in one-letter code: Protein FAM106A (169 aa).

It belongs to the FAM106 family.

This chain is Protein FAM106A (FAM106A), found in Homo sapiens (Human).